A 624-amino-acid polypeptide reads, in one-letter code: Actin-related protein 8 (624 aa).

M1 bears the N-acetylmethionine mark. The span at 1 to 25 (MTQAEKGEAENGKEKGGEKEKEQRG) shows a compositional bias: basic and acidic residues. The tract at residues 1 to 29 (MTQAEKGEAENGKEKGGEKEKEQRGVKRP) is disordered. The ATP site is built by S55 and T56. S132 is subject to Phosphoserine. 283 to 286 (DVGD) lines the ATP pocket. A Phosphoserine modification is found at S412. Residues 430–462 (SKQEQSAKATADRKSASKPIGFEGDLRGQSSDL) are disordered.

The protein belongs to the actin family. ARP8 subfamily. As to quaternary structure, component of the chromatin remodeling INO80 complex; specifically part of a complex module associated with the DBINO domain of INO80. Exists as monomers and dimers, but the dimer is most probably the biologically relevant form required for stable interactions with histones that exploits the twofold symmetry of the nucleosome core.

The protein resides in the nucleus. It is found in the chromosome. In terms of biological role, plays an important role in the functional organization of mitotic chromosomes. Exhibits low basal ATPase activity, and unable to polymerize. Proposed core component of the chromatin remodeling INO80 complex which is involved in transcriptional regulation, DNA replication and probably DNA repair. Required for the recruitment of INO80 (and probably the INO80 complex) to sites of DNA damage Strongly prefer nucleosomes and H3-H4 tetramers over H2A-H2B dimers, suggesting it may act as a nucleosome recognition module within the complex. The chain is Actin-related protein 8 (ACTR8) from Bos taurus (Bovine).